Reading from the N-terminus, the 293-residue chain is Carbapenem-hydrolyzing beta-lactamase KPC (293 aa).

The signal sequence occupies residues 1 to 24; it reads MSLYRRLVLLSCLSWPLAGFSATA. Ser69 functions as the Acyl-ester intermediate in the catalytic mechanism. Glu167 functions as the Proton acceptor in the catalytic mechanism. Residue 233–235 participates in substrate binding; that stretch reads KTG.

This sequence belongs to the class-A beta-lactamase family.

The enzyme catalyses a beta-lactam + H2O = a substituted beta-amino acid. Its activity is regulated as follows. Not inhibited by EDTA, inhibited by clavulanic acid and tazobactam. In terms of biological role, hydrolyzes carbapenems, penicillins, cephalosporins and aztreonam with varying efficiency. This Klebsiella oxytoca protein is Carbapenem-hydrolyzing beta-lactamase KPC (bla).